A 499-amino-acid polypeptide reads, in one-letter code: Rhamnogalacturonan I rhamnosyltransferase 1 (499 aa).

Residues 31 to 50 (WFVRVCSSILVWTCLVQLFA) form a helical; Signal-anchor for type II membrane protein membrane-spanning segment. N-linked (GlcNAc...) asparagine glycosylation is found at Asn-88, Asn-121, and Asn-207. 261-263 (HLR) serves as a coordination point for substrate. N-linked (GlcNAc...) asparagine glycosylation is found at Asn-375, Asn-435, and Asn-496.

Belongs to the glycosyltransferase GT106 family.

It is found in the golgi apparatus membrane. It carries out the reaction alpha-D-galacturonosyl-[(1-&gt;2)-alpha-L-rhamnosyl-(1-&gt;4)-alpha-D-galacturonosyl](n) + UDP-beta-L-rhamnose = [(1-&gt;2)-alpha-L-rhamnosyl-(1-&gt;4)-alpha-D-galacturonosyl](n+1) + UDP + H(+). It functions in the pathway glycan metabolism; pectin biosynthesis. Functionally, glycosyltransferase involved in the formation of rhamnogalacturonan I (RG-I) oligosaccharides in the seed coat mucilage, which is a specialized cell wall with abundant RG-I. Transfers the rhamnose residue from UDP-beta-L-rhamnose to RG-I oligosaccharides. This is Rhamnogalacturonan I rhamnosyltransferase 1 from Arabidopsis thaliana (Mouse-ear cress).